The chain runs to 188 residues: Elongation factor P-like protein (188 aa).

Belongs to the elongation factor P family.

The polypeptide is Elongation factor P-like protein (Saccharophagus degradans (strain 2-40 / ATCC 43961 / DSM 17024)).